Reading from the N-terminus, the 301-residue chain is UDP-N-acetylenolpyruvoylglucosamine reductase (301 aa).

One can recognise an FAD-binding PCMH-type domain in the interval 30–194 (VGGEADYLVF…LSVKFALAPG (165 aa)). Residue Arg-173 is part of the active site. Residue Ser-223 is the Proton donor of the active site. Glu-293 is an active-site residue.

The protein belongs to the MurB family. It depends on FAD as a cofactor.

Its subcellular location is the cytoplasm. The catalysed reaction is UDP-N-acetyl-alpha-D-muramate + NADP(+) = UDP-N-acetyl-3-O-(1-carboxyvinyl)-alpha-D-glucosamine + NADPH + H(+). It functions in the pathway cell wall biogenesis; peptidoglycan biosynthesis. Its function is as follows. Cell wall formation. This is UDP-N-acetylenolpyruvoylglucosamine reductase from Streptococcus pneumoniae (strain Hungary19A-6).